The following is a 217-amino-acid chain: Adenylate kinase (217 aa).

10 to 15 (GGGKGT) is an ATP binding site. The tract at residues 30 to 59 (STGDMLRAAVASGSEVGKKAKAVMDAGQLV) is NMP. Residues Thr31, Arg36, 57-59 (QLV), 85-88 (GFPR), and Gln92 contribute to the AMP site. Positions 126-164 (GRYTCAKCGAGYHDKFQLPQVAGKCDSCGGTEFARRPDD) are LID. Residue Arg127 coordinates ATP. The Zn(2+) site is built by Cys130, Cys133, Cys150, and Cys153. Residues Arg161 and Arg172 each contribute to the AMP site. Met200 serves as a coordination point for ATP.

It belongs to the adenylate kinase family. Monomer.

The protein localises to the cytoplasm. The catalysed reaction is AMP + ATP = 2 ADP. It functions in the pathway purine metabolism; AMP biosynthesis via salvage pathway; AMP from ADP: step 1/1. Its function is as follows. Catalyzes the reversible transfer of the terminal phosphate group between ATP and AMP. Plays an important role in cellular energy homeostasis and in adenine nucleotide metabolism. The protein is Adenylate kinase of Paramagnetospirillum magneticum (strain ATCC 700264 / AMB-1) (Magnetospirillum magneticum).